Reading from the N-terminus, the 570-residue chain is Dual specificity testis-specific protein kinase 2 (570 aa).

Positions D58 to M313 constitute a Protein kinase domain. ATP-binding positions include I64–V72 and K87. Catalysis depends on D176, which acts as the Proton acceptor. Phosphoserine; by autocatalysis is present on S219. Phosphoserine is present on residues S369, S456, and S460. Residues D513–G570 are disordered. Residues S558–G570 show a composition bias toward polar residues.

The protein belongs to the protein kinase superfamily. TKL Ser/Thr protein kinase family. Requires Mg(2+) as cofactor. Mn(2+) serves as cofactor. As to expression, predominantly expressed in testis and prostate. Found predominantly in non-germinal Sertoli cells.

It localises to the nucleus. It carries out the reaction L-seryl-[protein] + ATP = O-phospho-L-seryl-[protein] + ADP + H(+). It catalyses the reaction L-threonyl-[protein] + ATP = O-phospho-L-threonyl-[protein] + ADP + H(+). The catalysed reaction is L-tyrosyl-[protein] + ATP = O-phospho-L-tyrosyl-[protein] + ADP + H(+). With respect to regulation, activated by autophosphorylation on Ser-219. Dual specificity protein kinase activity catalyzing autophosphorylation and phosphorylation of exogenous substrates on both serine/threonine and tyrosine residues. Phosphorylates cofilin at 'Ser-3'. May play an important role in spermatogenesis. This is Dual specificity testis-specific protein kinase 2 (Tesk2) from Rattus norvegicus (Rat).